A 631-amino-acid polypeptide reads, in one-letter code: Vacuolar-sorting receptor 6 (631 aa).

An N-terminal signal peptide occupies residues 1 to 25; sequence MSLIHKGATLALFLALTMVVNGVFG. Topologically, residues 26–563 are lumenal; the sequence is RFIVEKSSVT…CIERSGSRIG (538 aa). Residues 57-165 enclose the PA domain; it reads NYGGYMIGSV…SFANTLKQAL (109 aa). 2 N-linked (GlcNAc...) asparagine glycosylation sites follow: asparagine 294 and asparagine 431. 2 consecutive EGF-like domains span residues 413–463 and 494–540; these read ETNE…TSCE and ETSG…FECK. 5 disulfides stabilise this stretch: cysteine 417–cysteine 435, cysteine 424–cysteine 444, cysteine 446–cysteine 462, cysteine 498–cysteine 511, and cysteine 530–cysteine 539. A helical membrane pass occupies residues 564-584; it reads WFPTFVILAAVASICVGGYVF. Over 585–631 the chain is Cytoplasmic; it reads YKYRLRSYMDSEIMAIMSQYMPLESQNTTDPMTGESQHQQLRLTSAA. Positions 604–607 match the Tyrosine-based internalization motif motif; that stretch reads YMPL. The segment at 610–631 is disordered; that stretch reads QNTTDPMTGESQHQQLRLTSAA.

The protein belongs to the VSR (BP-80) family. In terms of tissue distribution, expressed in seedlings, roots, leaves, flowers and siliques.

Its subcellular location is the membrane. The protein localises to the golgi apparatus membrane. It localises to the cytoplasmic vesicle. The protein resides in the clathrin-coated vesicle membrane. It is found in the prevacuolar compartment membrane. Its function is as follows. Vacuolar-sorting receptor (VSR) involved in clathrin-coated vesicles sorting from Golgi apparatus to vacuoles. This chain is Vacuolar-sorting receptor 6 (VSR6), found in Arabidopsis thaliana (Mouse-ear cress).